A 187-amino-acid polypeptide reads, in one-letter code: Putative protein YbeM (187 aa).

The region spanning methionine 1–proline 163 is the CN hydrolase domain.

This sequence belongs to the carbon-nitrogen hydrolase superfamily. NIT1/NIT2 family.

In terms of biological role, pseudogene resulting from a nucleotide deletion that introduces a premature stop codon at position 66. This is the C-terminal fragment. The intact protein (AC A0A140NCB4) hydrolyzes deaminated glutathione (dGSH, 2-oxoglutaramate) to alpha-ketoglutarate (alpha-KG) and cysteinylglycine, has less activity against alpha-ketoglutaramate (a-KGM) and no activity on glutathione or L-glutamine. May function as a metabolite repair enzyme. In Escherichia coli (strain K12), this protein is Putative protein YbeM (ybeM).